A 540-amino-acid chain; its full sequence is NADH-quinone oxidoreductase subunit N (540 aa).

Helical transmembrane passes span 24–44 (LSPM…EAFL), 54–74 (LVLA…LAGT), 88–108 (PTLF…LIIA), 158–178 (APGH…MLLF), 184–204 (LLTM…LCGL), 219–239 (YFLL…LLYG), 263–283 (ALIG…AVPF), 295–315 (PTPI…GAML), 331–351 (PVMW…AVTQ), 357–377 (MLAY…VAAN), 385–405 (MFYL…VTLV), 428–448 (VGGV…TSGF), 462–482 (GAVP…FFYV), and 505–525 (MFTA…GILP).

It belongs to the complex I subunit 2 family. As to quaternary structure, NDH-1 is composed of 14 different subunits. Subunits NuoA, H, J, K, L, M, N constitute the membrane sector of the complex.

Its subcellular location is the cell membrane. The enzyme catalyses a quinone + NADH + 5 H(+)(in) = a quinol + NAD(+) + 4 H(+)(out). Its function is as follows. NDH-1 shuttles electrons from NADH, via FMN and iron-sulfur (Fe-S) centers, to quinones in the respiratory chain. The immediate electron acceptor for the enzyme in this species is believed to be a menaquinone. Couples the redox reaction to proton translocation (for every two electrons transferred, four hydrogen ions are translocated across the cytoplasmic membrane), and thus conserves the redox energy in a proton gradient. The sequence is that of NADH-quinone oxidoreductase subunit N from Rhodococcus opacus (strain B4).